We begin with the raw amino-acid sequence, 421 residues long: Enolase (421 aa).

Catalysis depends on glutamate 207, which acts as the Proton donor. Positions 244, 285, and 312 each coordinate Mg(2+). The active-site Proton acceptor is the lysine 337. Positions 337, 366, 367, and 388 each coordinate (2R)-2-phosphoglycerate.

Belongs to the enolase family. Mg(2+) is required as a cofactor.

It localises to the cytoplasm. The protein resides in the secreted. It is found in the cell surface. The enzyme catalyses (2R)-2-phosphoglycerate = phosphoenolpyruvate + H2O. It participates in carbohydrate degradation; glycolysis; pyruvate from D-glyceraldehyde 3-phosphate: step 4/5. Its function is as follows. Catalyzes the reversible conversion of 2-phosphoglycerate (2-PG) into phosphoenolpyruvate (PEP). It is essential for the degradation of carbohydrates via glycolysis. This is Enolase from Ehrlichia ruminantium (strain Gardel).